Here is a 396-residue protein sequence, read N- to C-terminus: Apolipoprotein A-IV (396 aa).

A signal peptide spans 1-20; it reads MFLKAVVLTLALVAVAGARA. 13 consecutive repeat copies span residues 33 to 54, 60 to 81, 82 to 103, 115 to 136, 137 to 158, 159 to 180, 181 to 202, 203 to 224, 225 to 246, 247 to 268, 269 to 286, 287 to 308, and 309 to 330. The interval 33–330 is 13 X 22 AA approximate tandem repeats; the sequence is DYFSQLSNNA…QMEQLRQKLG (298 aa). The interval 361–396 is disordered; it reads KESQDKTLSLPELEQQQEQQQEQQQEQVQMLAPLES. Low complexity predominate over residues 374–389; that stretch reads EQQQEQQQEQQQEQVQ.

The protein belongs to the apolipoprotein A1/A4/E family. As to quaternary structure, homodimer. Post-translationally, phosphorylation sites are present in the extracellular medium. As to expression, synthesized primarily in the intestine and secreted in plasma.

It is found in the secreted. Functionally, may have a role in chylomicrons and VLDL secretion and catabolism. Required for efficient activation of lipoprotein lipase by ApoC-II; potent activator of LCAT. Apoa-IV is a major component of HDL and chylomicrons. In Homo sapiens (Human), this protein is Apolipoprotein A-IV.